A 90-amino-acid polypeptide reads, in one-letter code: Bombyxin B-12 (90 aa).

The first 20 residues, 1-20 (MMKTTIMFMLVVVISLTYSS), serve as a signal peptide directing secretion. 3 disulfide bridges follow: C30-C76, C42-C89, and C75-C80. Positions 49–67 (SGAQYAPYFWTRQYLGSRG) are cleaved as a propeptide — c peptide like.

Belongs to the insulin family. As to quaternary structure, heterodimer of a B chain and an A chain linked by two disulfide bonds.

The protein resides in the secreted. Brain peptide responsible for activation of prothoracic glands to produce ecdysone in insects. This is Bombyxin B-12 (BBXB12) from Bombyx mori (Silk moth).